An 850-amino-acid chain; its full sequence is Vacuolar membrane protease (850 aa).

The Cytoplasmic portion of the chain corresponds to 1 to 20; it reads MASSRAQWFNPIAFTPWPVT. The helical transmembrane segment at 21–41 threads the bilayer; the sequence is CITTIVYLALLIPILVINLVV. Residues 42 to 282 are Vacuolar-facing; that stretch reads PSAPETNPKG…DGKSKDQNKV (241 aa). N53, N116, and N119 each carry an N-linked (GlcNAc...) asparagine glycan. Residues H175 and D187 each coordinate Zn(2+). E221 serves as the catalytic Proton acceptor. E222 is a Zn(2+) binding site. Residues 283 to 303 traverse the membrane as a helical segment; that stretch reads NSGTGTLGVWFDMFGTAFAVF. At 304–308 the chain is on the cytoplasmic side; that stretch reads RLHTL. The chain crosses the membrane as a helical span at residues 309–329; it reads FAISVALLVIAPLVIFVTSVI. At 330–363 the chain is on the vacuolar side; sequence LSKTDRMYLFSMSKSLEGTGDQVSLRGLRGFSRT. The chain crosses the membrane as a helical span at residues 364–384; it reads PIILVIATTIPICLAYLLEKV. At 385-393 the chain is on the cytoplasmic side; that stretch reads NPYIVHSSQ. A helical membrane pass occupies residues 394–414; that stretch reads FSVWSMMFSAWIFLAWFLACA. Residues 415 to 425 lie on the Vacuolar side of the membrane; the sequence is ADFFRPSALHR. The helical transmembrane segment at 426-446 threads the bilayer; that stretch reads AYSYTWIFIATWIMLVINTVY. Residues 447–529 are Cytoplasmic-facing; the sequence is ANQKGIAAGP…TLPRWTWVLQ (83 aa). A helical transmembrane segment spans residues 530–550; that stretch reads LLLLAPIVLILVGQLALFLTA. At 551 to 563 the chain is on the vacuolar side; that stretch reads SMCQVGSDGVSTF. A helical membrane pass occupies residues 564-584; the sequence is VVYLACSVFTTLLCIPLFPLI. Residues 585–590 lie on the Cytoplasmic side of the membrane; it reads HRFTYH. A helical transmembrane segment spans residues 591–611; it reads IPTFLFLVFIGTLIYNLVAFP. At 612–850 the chain is on the vacuolar side; that stretch reads FSPANRLKTF…VEASHSFTIQ (239 aa). N-linked (GlcNAc...) asparagine glycans are attached at residues N630, N658, and N702.

It belongs to the peptidase M28 family. Requires Zn(2+) as cofactor.

It localises to the vacuole membrane. May be involved in vacuolar sorting and osmoregulation. This is Vacuolar membrane protease from Ajellomyces capsulatus (strain NAm1 / WU24) (Darling's disease fungus).